We begin with the raw amino-acid sequence, 338 residues long: Glycerol-3-phosphate dehydrogenase [NAD(P)+] (338 aa).

Residues serine 13, tryptophan 14, and lysine 108 each contribute to the NADPH site. Positions 108, 139, and 141 each coordinate sn-glycerol 3-phosphate. An NADPH-binding site is contributed by alanine 143. Sn-glycerol 3-phosphate-binding residues include lysine 194, aspartate 247, serine 257, arginine 258, and asparagine 259. Residue lysine 194 is the Proton acceptor of the active site. Position 258 (arginine 258) interacts with NADPH. NADPH is bound by residues valine 282 and glutamate 284.

This sequence belongs to the NAD-dependent glycerol-3-phosphate dehydrogenase family.

It localises to the cytoplasm. It carries out the reaction sn-glycerol 3-phosphate + NAD(+) = dihydroxyacetone phosphate + NADH + H(+). The enzyme catalyses sn-glycerol 3-phosphate + NADP(+) = dihydroxyacetone phosphate + NADPH + H(+). Its pathway is membrane lipid metabolism; glycerophospholipid metabolism. Catalyzes the reduction of the glycolytic intermediate dihydroxyacetone phosphate (DHAP) to sn-glycerol 3-phosphate (G3P), the key precursor for phospholipid synthesis. The chain is Glycerol-3-phosphate dehydrogenase [NAD(P)+] from Streptococcus uberis (strain ATCC BAA-854 / 0140J).